The primary structure comprises 341 residues: Methionine import ATP-binding protein MetN 2 (341 aa).

Residues 2-241 (ILLENVKKIY…PQQDITKRFV (240 aa)) form the ABC transporter domain. 38–45 (GYSGAGKS) lines the ATP pocket.

This sequence belongs to the ABC transporter superfamily. Methionine importer (TC 3.A.1.24) family. In terms of assembly, the complex is composed of two ATP-binding proteins (MetN), two transmembrane proteins (MetI) and a solute-binding protein (MetQ).

It localises to the cell membrane. The catalysed reaction is L-methionine(out) + ATP + H2O = L-methionine(in) + ADP + phosphate + H(+). It carries out the reaction D-methionine(out) + ATP + H2O = D-methionine(in) + ADP + phosphate + H(+). Functionally, part of the ABC transporter complex MetNIQ involved in methionine import. Responsible for energy coupling to the transport system. The protein is Methionine import ATP-binding protein MetN 2 of Bacillus thuringiensis subsp. konkukian (strain 97-27).